The following is a 150-amino-acid chain: Cytochrome c oxidase subunit 5A, mitochondrial (150 aa).

Residues 1-41 (MLGAALRRCAVAATARAGPRGLLHSAPTPGPAAAIQSVRCY) constitute a mitochondrion transit peptide. The SIFI-degron signature appears at 2–17 (LGAALRRCAVAATARA). Lys87 and Lys113 each carry N6-acetyllysine. Phosphothreonine is present on Thr141.

This sequence belongs to the cytochrome c oxidase subunit 5A family. As to quaternary structure, component of the cytochrome c oxidase (complex IV, CIV), a multisubunit enzyme composed of 14 subunits. The complex is composed of a catalytic core of 3 subunits MT-CO1, MT-CO2 and MT-CO3, encoded in the mitochondrial DNA, and 11 supernumerary subunits COX4I, COX5A, COX5B, COX6A, COX6B, COX6C, COX7A, COX7B, COX7C, COX8 and NDUFA4, which are encoded in the nuclear genome. The complex exists as a monomer or a dimer and forms supercomplexes (SCs) in the inner mitochondrial membrane with NADH-ubiquinone oxidoreductase (complex I, CI) and ubiquinol-cytochrome c oxidoreductase (cytochrome b-c1 complex, complex III, CIII), resulting in different assemblies (supercomplex SCI(1)III(2)IV(1) and megacomplex MCI(2)III(2)IV(2)). Interacts with AFG1L. Interacts with RAB5IF. Post-translationally, in response to mitochondrial stress, the precursor protein is ubiquitinated by the SIFI complex in the cytoplasm before mitochondrial import, leading to its degradation. Within the SIFI complex, UBR4 initiates ubiquitin chain that are further elongated or branched by KCMF1.

It is found in the mitochondrion inner membrane. The protein operates within energy metabolism; oxidative phosphorylation. Component of the cytochrome c oxidase, the last enzyme in the mitochondrial electron transport chain which drives oxidative phosphorylation. The respiratory chain contains 3 multisubunit complexes succinate dehydrogenase (complex II, CII), ubiquinol-cytochrome c oxidoreductase (cytochrome b-c1 complex, complex III, CIII) and cytochrome c oxidase (complex IV, CIV), that cooperate to transfer electrons derived from NADH and succinate to molecular oxygen, creating an electrochemical gradient over the inner membrane that drives transmembrane transport and the ATP synthase. Cytochrome c oxidase is the component of the respiratory chain that catalyzes the reduction of oxygen to water. Electrons originating from reduced cytochrome c in the intermembrane space (IMS) are transferred via the dinuclear copper A center (CU(A)) of subunit 2 and heme A of subunit 1 to the active site in subunit 1, a binuclear center (BNC) formed by heme A3 and copper B (CU(B)). The BNC reduces molecular oxygen to 2 water molecules using 4 electrons from cytochrome c in the IMS and 4 protons from the mitochondrial matrix. The sequence is that of Cytochrome c oxidase subunit 5A, mitochondrial (COX5A) from Cebuella pygmaea (Pygmy marmoset).